Consider the following 246-residue polypeptide: Phosphomannomutase 2 (246 aa).

Residue alanine 2 is modified to N-acetylalanine. Aspartate 12 acts as the Nucleophile in catalysis. 2 residues coordinate Mg(2+): aspartate 12 and aspartate 14. Aspartate 14 acts as the Proton donor/acceptor in catalysis. Residues arginine 21, arginine 123, arginine 134, arginine 141, serine 179, and aspartate 181 each coordinate alpha-D-mannose 1-phosphate. Mg(2+)-binding residues include aspartate 209, phenylalanine 221, aspartate 223, and threonine 226.

This sequence belongs to the eukaryotic PMM family. Homodimer.

The protein localises to the cytoplasm. The catalysed reaction is alpha-D-mannose 1-phosphate = D-mannose 6-phosphate. The protein operates within nucleotide-sugar biosynthesis; GDP-alpha-D-mannose biosynthesis; alpha-D-mannose 1-phosphate from D-fructose 6-phosphate: step 2/2. Its function is as follows. Involved in the synthesis of the GDP-mannose and dolichol-phosphate-mannose required for a number of critical mannosyl transfer reactions. The protein is Phosphomannomutase 2 (PMM2) of Bos taurus (Bovine).